Here is a 246-residue protein sequence, read N- to C-terminus: Aliphatic sulfonates import ATP-binding protein SsuB 2 (246 aa).

Residues 4-218 form the ABC transporter domain; it reads VTVRGLRRAF…RRDPRFEQAR (215 aa). 36-43 is a binding site for ATP; the sequence is GRSGGGKT.

This sequence belongs to the ABC transporter superfamily. Aliphatic sulfonates importer (TC 3.A.1.17.2) family. The complex is composed of two ATP-binding proteins (SsuB), two transmembrane proteins (SsuC) and a solute-binding protein (SsuA).

The protein resides in the cell membrane. It catalyses the reaction ATP + H2O + aliphatic sulfonate-[sulfonate-binding protein]Side 1 = ADP + phosphate + aliphatic sulfonateSide 2 + [sulfonate-binding protein]Side 1.. Its function is as follows. Part of the ABC transporter complex SsuABC involved in aliphatic sulfonates import. Responsible for energy coupling to the transport system. The sequence is that of Aliphatic sulfonates import ATP-binding protein SsuB 2 from Frankia alni (strain DSM 45986 / CECT 9034 / ACN14a).